We begin with the raw amino-acid sequence, 668 residues long: Tastin (668 aa).

Disordered stretches follow at residues 1 to 102, 154 to 177, and 189 to 285; these read MTTL…GGSN, ERKGGTTQRGQSARSSAYLAPRIP, and FSRL…GRHH. The residue at position 16 (S16) is a Phosphoserine. Polar residues-rich tracts occupy residues 27–37 and 55–64; these read QRCQDFSSVKS and PRSTQRQRPL. S97 bears the Phosphoserine mark. Polar residues predominate over residues 158–168; it reads GTTQRGQSARS. Residue S169 is modified to Phosphoserine. 2 stretches are compositionally biased toward basic and acidic residues: residues 227 to 246 and 269 to 282; these read ELRRETCGGGRDGDCTDRRT and GEQEAVPHSDDGGG. A phosphoserine mark is found at S306, S324, and S338. 2 disordered regions span residues 364-392 and 462-502; these read ITLQKEPRKPSVASTSGPRPKRTPSHQEL and TEPL…AEPE.

In terms of assembly, directly binds bystin, and indirectly trophinin.

The protein resides in the cytoplasm. Could be involved with bystin and trophinin in a cell adhesion molecule complex that mediates an initial attachment of the blastocyst to uterine epithelial cells at the time of the embryo implantation. This chain is Tastin, found in Mus musculus (Mouse).